A 78-amino-acid polypeptide reads, in one-letter code: D-alanyl carrier protein (78 aa).

The 78-residue stretch at 1 to 78 folds into the Carrier domain; the sequence is MEFREQVLDL…KIVEALEELK (78 aa). O-(pantetheine 4'-phosphoryl)serine is present on S36.

This sequence belongs to the DltC family. 4'-phosphopantetheine is transferred from CoA to a specific serine of apo-DCP.

It is found in the cytoplasm. The protein operates within cell wall biogenesis; lipoteichoic acid biosynthesis. Carrier protein involved in the D-alanylation of lipoteichoic acid (LTA). The loading of thioester-linked D-alanine onto DltC is catalyzed by D-alanine--D-alanyl carrier protein ligase DltA. The DltC-carried D-alanyl group is further transferred to cell membrane phosphatidylglycerol (PG) by forming an ester bond, probably catalyzed by DltD. D-alanylation of LTA plays an important role in modulating the properties of the cell wall in Gram-positive bacteria, influencing the net charge of the cell wall. The sequence is that of D-alanyl carrier protein from Staphylococcus carnosus (strain TM300).